Reading from the N-terminus, the 359-residue chain is GTP cyclohydrolase FolE2 (359 aa).

This sequence belongs to the GTP cyclohydrolase IV family.

It carries out the reaction GTP + H2O = 7,8-dihydroneopterin 3'-triphosphate + formate + H(+). It participates in cofactor biosynthesis; 7,8-dihydroneopterin triphosphate biosynthesis; 7,8-dihydroneopterin triphosphate from GTP: step 1/1. In terms of biological role, converts GTP to 7,8-dihydroneopterin triphosphate. This is GTP cyclohydrolase FolE2 from Cereibacter sphaeroides (strain ATCC 17025 / ATH 2.4.3) (Rhodobacter sphaeroides).